A 229-amino-acid chain; its full sequence is 7-cyano-7-deazaguanine synthase (229 aa).

Phe8–Leu18 provides a ligand contact to ATP. 4 residues coordinate Zn(2+): Cys186, Cys195, Cys198, and Cys201.

It belongs to the QueC family. It depends on Zn(2+) as a cofactor.

The enzyme catalyses 7-carboxy-7-deazaguanine + NH4(+) + ATP = 7-cyano-7-deazaguanine + ADP + phosphate + H2O + H(+). Its pathway is purine metabolism; 7-cyano-7-deazaguanine biosynthesis. In terms of biological role, catalyzes the ATP-dependent conversion of 7-carboxy-7-deazaguanine (CDG) to 7-cyano-7-deazaguanine (preQ(0)). The sequence is that of 7-cyano-7-deazaguanine synthase from Edwardsiella ictaluri (strain 93-146).